Consider the following 283-residue polypeptide: Putative pyruvate, phosphate dikinase regulatory protein (283 aa).

Residue 156 to 163 participates in ADP binding; sequence GLSRAGKT.

The protein belongs to the pyruvate, phosphate/water dikinase regulatory protein family. PDRP subfamily.

The catalysed reaction is N(tele)-phospho-L-histidyl/L-threonyl-[pyruvate, phosphate dikinase] + ADP = N(tele)-phospho-L-histidyl/O-phospho-L-threonyl-[pyruvate, phosphate dikinase] + AMP + H(+). It catalyses the reaction N(tele)-phospho-L-histidyl/O-phospho-L-threonyl-[pyruvate, phosphate dikinase] + phosphate + H(+) = N(tele)-phospho-L-histidyl/L-threonyl-[pyruvate, phosphate dikinase] + diphosphate. Its function is as follows. Bifunctional serine/threonine kinase and phosphorylase involved in the regulation of the pyruvate, phosphate dikinase (PPDK) by catalyzing its phosphorylation/dephosphorylation. This is Putative pyruvate, phosphate dikinase regulatory protein from Desulfotalea psychrophila (strain LSv54 / DSM 12343).